Here is a 358-residue protein sequence, read N- to C-terminus: UDP-N-acetylglucosamine--N-acetylmuramyl-(pentapeptide) pyrophosphoryl-undecaprenol N-acetylglucosamine transferase (358 aa).

UDP-N-acetyl-alpha-D-glucosamine is bound by residues 11–13 (TGG), Asn120, Arg161, Ser188, and Gln282.

Belongs to the glycosyltransferase 28 family. MurG subfamily.

It localises to the cell inner membrane. The catalysed reaction is di-trans,octa-cis-undecaprenyl diphospho-N-acetyl-alpha-D-muramoyl-L-alanyl-D-glutamyl-meso-2,6-diaminopimeloyl-D-alanyl-D-alanine + UDP-N-acetyl-alpha-D-glucosamine = di-trans,octa-cis-undecaprenyl diphospho-[N-acetyl-alpha-D-glucosaminyl-(1-&gt;4)]-N-acetyl-alpha-D-muramoyl-L-alanyl-D-glutamyl-meso-2,6-diaminopimeloyl-D-alanyl-D-alanine + UDP + H(+). It functions in the pathway cell wall biogenesis; peptidoglycan biosynthesis. In terms of biological role, cell wall formation. Catalyzes the transfer of a GlcNAc subunit on undecaprenyl-pyrophosphoryl-MurNAc-pentapeptide (lipid intermediate I) to form undecaprenyl-pyrophosphoryl-MurNAc-(pentapeptide)GlcNAc (lipid intermediate II). The chain is UDP-N-acetylglucosamine--N-acetylmuramyl-(pentapeptide) pyrophosphoryl-undecaprenol N-acetylglucosamine transferase from Synechococcus sp. (strain CC9902).